Here is a 315-residue protein sequence, read N- to C-terminus: Initiation factor TFIIB homolog (315 aa).

The protein belongs to the asfivirus C315R family.

In terms of biological role, putative initation factor. In Ornithodoros (relapsing fever ticks), this protein is Initiation factor TFIIB homolog.